An 864-amino-acid chain; its full sequence is Carbohydrate-responsive element-binding protein (864 aa).

2 disordered regions span residues 15–41 (PRVV…AGGL) and 53–77 (MVSS…LADF). Phosphoserine occurs at positions 20, 23, and 25. The residue at position 27 (Thr27) is a Phosphothreonine. Ser196 carries the post-translational modification Phosphoserine. Disordered stretches follow at residues 332-397 (SSGI…APGP), 449-468 (PGVS…QPGP), 489-533 (PHFT…TARD), 547-570 (PEQA…PQDT), and 583-602 (PIPA…LAPP). The span at 351–368 (GMTPHSGNTRLQARNSCS) shows a compositional bias: polar residues. The span at 513–531 (ASPPTLASATASPTATATA) shows a compositional bias: low complexity. A Phosphoserine; by AMPK modification is found at Ser566. Positions 583-596 (PIPAPTPPRPPPGP) are enriched in pro residues. Residues Ser614, Ser626, and Ser643 each carry the phosphoserine modification. Residues 661 to 715 (NRRITHISAEQKRRFNIKLGFDTLHGLVSTLSAQPSLKVSKATTLQKTAEYILML) enclose the bHLH domain. The tract at residues 715 to 736 (LQQERAAMQEEAQQLRDEIEEL) is leucine-zipper.

Binds DNA as a heterodimer with TCFL4/MLX. Post-translationally, phosphorylation at Ser-566 by AMPK inactivates the DNA-binding activity. As to expression, expressed in the ventricular and intermediate zones of the developing spinal cord of 12.5 dpc embryos. In later embryos expressed in a variety of tissues.

It localises to the nucleus. Transcriptional repressor. Binds to the canonical and non-canonical E box sequences 5'-CACGTG-3'. This is Carbohydrate-responsive element-binding protein (Mlxipl) from Mus musculus (Mouse).